Reading from the N-terminus, the 79-residue chain is Protein S100-G (79 aa).

Residue S2 is modified to N-acetylserine. EF-hand domains follow at residues 13–48 (IFEK…KGPN) and 45–79 (KGPN…KISQ). Positions 26 and 31 each coordinate Ca(2+). At S42 the chain carries Phosphoserine. Positions 58, 60, 62, 64, and 69 each coordinate Ca(2+).

The protein belongs to the S-100 family.

The chain is Protein S100-G (S100G) from Homo sapiens (Human).